A 282-amino-acid chain; its full sequence is Shikimate dehydrogenase (NADP(+)) (282 aa).

Residues 18 to 20 (SRS) and T65 contribute to the shikimate site. The active-site Proton acceptor is the K69. NADP(+) is bound at residue E81. Shikimate-binding residues include N90 and D105. NADP(+) is bound by residues 130–134 (GAGGA), 154–159 (NRTPAR), and M222. Y224 lines the shikimate pocket. G245 provides a ligand contact to NADP(+).

The protein belongs to the shikimate dehydrogenase family. In terms of assembly, homodimer.

It catalyses the reaction shikimate + NADP(+) = 3-dehydroshikimate + NADPH + H(+). It participates in metabolic intermediate biosynthesis; chorismate biosynthesis; chorismate from D-erythrose 4-phosphate and phosphoenolpyruvate: step 4/7. In terms of biological role, involved in the biosynthesis of the chorismate, which leads to the biosynthesis of aromatic amino acids. Catalyzes the reversible NADPH linked reduction of 3-dehydroshikimate (DHSA) to yield shikimate (SA). The protein is Shikimate dehydrogenase (NADP(+)) of Acidovorax sp. (strain JS42).